The chain runs to 276 residues: Mitochondrial outer membrane protein porin of 34 kDa (276 aa).

Belongs to the eukaryotic mitochondrial porin (TC 1.B.8.1) family.

The protein resides in the mitochondrion outer membrane. In terms of biological role, forms a channel through the cell membrane that allows diffusion of small hydrophilic molecules. The channel adopts an open conformation at low or zero membrane potential and a closed conformation at potentials above 30-40 mV. The open state has a weak anion selectivity whereas the closed state is cation-selective. This Solanum tuberosum (Potato) protein is Mitochondrial outer membrane protein porin of 34 kDa.